Here is an 81-residue protein sequence, read N- to C-terminus: Sulfur carrier protein TusA (81 aa).

The Cysteine persulfide intermediate role is filled by C19.

This sequence belongs to the sulfur carrier protein TusA family. As to quaternary structure, interacts with IscS.

It localises to the cytoplasm. Its pathway is tRNA modification. Functionally, sulfur carrier protein involved in sulfur trafficking in the cell. Part of a sulfur-relay system required for 2-thiolation during synthesis of 2-thiouridine of the modified wobble base 5-methylaminomethyl-2-thiouridine (mnm(5)s(2)U) in tRNA. Interacts with IscS and stimulates its cysteine desulfurase activity. Accepts an activated sulfur from IscS, which is then transferred to TusD, and thus determines the direction of sulfur flow from IscS to 2-thiouridine formation. Also appears to be involved in sulfur transfer for the biosynthesis of molybdopterin. The protein is Sulfur carrier protein TusA of Escherichia fergusonii (strain ATCC 35469 / DSM 13698 / CCUG 18766 / IAM 14443 / JCM 21226 / LMG 7866 / NBRC 102419 / NCTC 12128 / CDC 0568-73).